The sequence spans 164 residues: Aspartate carbamoyltransferase regulatory chain (164 aa).

Residues cysteine 116, cysteine 121, cysteine 146, and cysteine 149 each contribute to the Zn(2+) site.

It belongs to the PyrI family. Contains catalytic and regulatory chains. It depends on Zn(2+) as a cofactor.

Its function is as follows. Involved in allosteric regulation of aspartate carbamoyltransferase. The sequence is that of Aspartate carbamoyltransferase regulatory chain from Staphylothermus marinus (strain ATCC 43588 / DSM 3639 / JCM 9404 / F1).